Reading from the N-terminus, the 613-residue chain is Laccase 1 (613 aa).

A signal peptide spans methionine 1 to alanine 20. Plastocyanin-like domains lie at isoleucine 29 to lysine 142, tyrosine 171 to proline 359, and aspartate 468 to glycine 598. Asparagine 74 carries an N-linked (GlcNAc...) asparagine glycan. Positions 78, 80, 122, and 124 each coordinate Cu cation. Residues asparagine 256, asparagine 279, and asparagine 484 are each glycosylated (N-linked (GlcNAc...) asparagine). Cu cation contacts are provided by histidine 506, histidine 509, and histidine 511. Asparagine 526 carries N-linked (GlcNAc...) asparagine glycosylation. Cu cation-binding residues include histidine 580, cysteine 581, histidine 582, and histidine 586.

The protein belongs to the multicopper oxidase family. The cofactor is Cu cation.

Its subcellular location is the cell surface. Its pathway is pigment biosynthesis. Functionally, laccase; part of the Pks1 gene cluster that mediates the biosynthesis of an anthraquinone derivative pigment that contributes to conidial pigmentation that provides protection from UV radiation, heat and cold stress. The polyketide synthase Pks1 produces 1-acetyl-2,4,6,8-tetrahydroxy-9,10-anthraquinone though condensation of acetyl-CoA with malonyl-CoA. The dehydratase EthD and the laccase Mlac1 further convert the anthraquinone derivative into the final conidial pigment. The sequence is that of Laccase 1 from Metarhizium acridum (strain CQMa 102).